A 234-amino-acid chain; its full sequence is Protein UL20 homolog (234 aa).

The next 4 membrane-spanning stretches (helical) occupy residues 82–102 (VVLFGLSTFVLRPSCCLIFLF), 112–132 (FLILGTTITAFFYGTLMLEMY), 153–173 (IGALSMLGPIIFVAISYNMIF), and 191–211 (TSGFVIYLVMIASLAYSITSI).

This sequence belongs to the alphaherpesvirinae UL20 family. In terms of assembly, interacts with gK (via N-terminus); this interaction plays a role in the coordinate transport of UL20 and gK to the trans-Golgi network (TGN), and is required for their cell surface expression. Interacts with gB.

It is found in the virion. It localises to the host cell membrane. Its subcellular location is the host endosome membrane. The protein resides in the host Golgi apparatus membrane. The protein localises to the host nucleus membrane. Functionally, plays an essential role in egress of virus particles from the nucleus, cytoplasmic envelopment and virus-induced cell fusion. Forms a functional protein complex with gK and this interaction is absolutely essential for their coordinate intracellular transport, gK glycosylation, expression on host cell surface, and function. Together, they modulate gB-mediated virus-induced cell fusion and virion egress and therefore actively participate in these processes. This is Protein UL20 homolog (MDV032) from Gallid herpesvirus 2 (strain Chicken/Md5/ATCC VR-987) (GaHV-2).